The chain runs to 120 residues: Large ribosomal subunit protein uL22 (120 aa).

Belongs to the universal ribosomal protein uL22 family. As to quaternary structure, part of the 50S ribosomal subunit.

Functionally, this protein binds specifically to 23S rRNA; its binding is stimulated by other ribosomal proteins, e.g. L4, L17, and L20. It is important during the early stages of 50S assembly. It makes multiple contacts with different domains of the 23S rRNA in the assembled 50S subunit and ribosome. The globular domain of the protein is located near the polypeptide exit tunnel on the outside of the subunit, while an extended beta-hairpin is found that lines the wall of the exit tunnel in the center of the 70S ribosome. This is Large ribosomal subunit protein uL22 from Oenococcus oeni (strain ATCC BAA-331 / PSU-1).